A 126-amino-acid polypeptide reads, in one-letter code: Heterotrimeric G protein gamma subunit GPG1 (126 aa).

G proteins are composed of 3 units, alpha, beta and gamma. GPG1 interacts with the beta subunits GBP1 and GPB2.

It is found in the cytoplasm. Functionally, gamma subunit of a guanine nucleotide-binding protein (G protein). G proteins are involved as modulators or transducers in various transmembrane signaling systems. The beta and gamma chains are required for the GTPase activity, for replacement of GDP by GTP, and for G protein-effector interaction. Involved in the determination of the cAMP level according to nutritional conditions, most probably as a regulator of cAMP phosphodiesterase. Required for the control of pseudohyphal and haploid invasive growth. The sequence is that of Heterotrimeric G protein gamma subunit GPG1 (GPG1) from Saccharomyces cerevisiae (strain ATCC 204508 / S288c) (Baker's yeast).